The sequence spans 562 residues: Protein FAM83D-B (562 aa).

A disordered region spans residues 424–472 (ITTQTTETSQCTTQTPAPTSSVARLSNSSNSSSSSFSSASTTSTGSNCS). Over residues 425-472 (TTQTTETSQCTTQTPAPTSSVARLSNSSNSSSSSFSSASTTSTGSNCS) the composition is skewed to low complexity.

It belongs to the FAM83 family.

It is found in the cytoplasm. The protein localises to the cytoskeleton. It localises to the spindle. The protein resides in the spindle pole. Its function is as follows. May regulate cell proliferation, growth, migration and epithelial to mesenchymal transition. May also be important for proper chromosome congression and alignment during mitosis. The sequence is that of Protein FAM83D-B from Xenopus laevis (African clawed frog).